We begin with the raw amino-acid sequence, 435 residues long: F-box/FBD/LRR-repeat protein At1g51370 (435 aa).

Residues 18 to 64 (EDRISQLPEPLISEILFHLSTKDSVRTSALSTKWRYLWQSVPGLDLD) enclose the F-box domain. LRR repeat units follow at residues 123 to 148 (VHCFHDNKIPLSIYTCTTLVHLRLRW), 170 to 195 (VSYPNETTLQKLISGSPVLEELILFS), 234 to 259 (AKMYSTKNFQIISSGFPAKLDIDFVN), 262 to 287 (GRYQKKKVIEDILIDISRVRDLVISS), and 314 to 340 (RFYISDLEMLPTLLESCPKLESLILEM). In terms of domain architecture, FBD spans 354–406 (EPNVMVSTVPWCLVSSLKFVELKRSIPRYEGEMELVRYVLTNSTVLKKLRLNV).

This Arabidopsis thaliana (Mouse-ear cress) protein is F-box/FBD/LRR-repeat protein At1g51370.